We begin with the raw amino-acid sequence, 483 residues long: Pre-glycoprotein polyprotein GP complex (483 aa).

G2 is lipidated: N-myristoyl glycine; by host. Over 2–17 (GQFISFMQEIPIFLQE) the chain is Extracellular. A helical membrane pass occupies residues 18-32 (ALNIALVAVSLICIV). A topological domain (cytoplasmic) is located at residue K33. A helical transmembrane segment spans residues 34 to 53 (GLVNLYRCGLFQLMVFLVLA). Extracellular-facing segments span residues 54 to 58 (GRSCS) and 59 to 422 (EETF…TLVD). C57 is a Zn(2+) binding site. N-linked (GlcNAc...) asparagine; by host glycans are attached at residues N83 and N95. 6 disulfide bridges follow: C92-C224, C134-C162, C205-C211, C269-C282, C291-C300, and C354-C375. Residues N164 and N176 are each glycosylated (N-linked (GlcNAc...) asparagine; by host). N-linked (GlcNAc...) asparagine; by host glycosylation is found at N355, N363, N380, and N385. A helical transmembrane segment spans residues 423–443 (ICFWSTVFFTSTLFLHLIGFP). Residues 444 to 483 (THEHIRGEGCPLPHRLNSMGGCRCGKYLPLKKPTIWHRRH) lie on the Cytoplasmic side of the membrane. Residues H445, H447, C453, H457, C465, C467, and H483 each contribute to the Zn(2+) site.

Belongs to the arenaviridae GPC protein family. In terms of assembly, homotetramer; disulfide-linked. Homotetramer. GP2 homotetramers bind through ionic interactions with GP1 homotetramers to form the GP complex together with the stable signal peptide. The GP-C polyprotein interacts with the host protease MBTPS1/SKI-1 resulting in the polyprotein processing. In terms of processing, specific enzymatic cleavages in vivo yield mature proteins. GP-C polyprotein is cleaved in the endoplasmic reticulum by the host protease MBTPS1. Only cleaved glycoprotein is incorporated into virions. The SSP remains stably associated with the GP complex following cleavage by signal peptidase and plays crucial roles in the trafficking of GP through the secretory pathway. Post-translationally, myristoylation is necessary for GP2-mediated fusion activity.

The protein localises to the virion membrane. It localises to the host endoplasmic reticulum membrane. Its subcellular location is the host Golgi apparatus membrane. The protein resides in the host cell membrane. In terms of biological role, class I viral fusion protein that directs fusion of viral and host endosomal membranes, leading to delivery of the nucleocapsid into the cytoplasm. Membrane fusion is mediated by irreversible conformational changes induced upon acidification in the endosome. Its function is as follows. Stable signal peptide (SSP): cleaved and functions as a signal peptide. In addition, it is also retained as the third component of the GP complex. The SSP is required for efficient glycoprotein expression, post-translational maturation cleavage of GP1 and GP2, glycoprotein transport to the cell surface plasma membrane, formation of infectious virus particles, and acid pH-dependent glycoprotein-mediated cell fusion. Functionally, interacts with the host receptor. This Artibeus (neotropical fruit bats) protein is Pre-glycoprotein polyprotein GP complex.